The sequence spans 954 residues: Patched domain-containing protein 3 (954 aa).

The segment covering 1–20 (MPWVEPKPRPGPEQKPKLTK) has biased composition (basic and acidic residues). The interval 1 to 103 (MPWVEPKPRP…APLPEEETPE (103 aa)) is disordered. The segment covering 42 to 57 (QPPPGPLAPPKSPEPS) has biased composition (pro residues). Residues 90 to 102 (ELDDAPLPEEETP) are compositionally biased toward acidic residues. Residues 139 to 159 (WIFLLAPLMLTAALGTGFLYL) traverse the membrane as a helical segment. N-linked (GlcNAc...) asparagine glycosylation is found at Asn-192, Asn-275, and Asn-279. Transmembrane regions (helical) follow at residues 297-317 (LTGF…QLLL), 383-403 (VIPV…TSCF), 423-443 (FLAV…FVII), 447-467 (SPFL…SAWH), 486-506 (AAVS…TGIM), 520-540 (GMTL…FMAL), and 603-623 (YFVV…CFHV). Residues 383–540 (VIPVFHLAYI…ITCFGAFMAL (158 aa)) enclose the SSD domain. Residues Asn-678, Asn-692, and Asn-737 are each glycosylated (N-linked (GlcNAc...) asparagine). Helical transmembrane passes span 804–824 (VLVA…YPLC), 826–846 (LWVT…MAFW), 858–878 (LVIC…AFVS), 894–914 (LLGY…CVLA), and 927–947 (IMFL…PVFL).

It belongs to the patched family. Expressed in germ cells of the testis (at protein level). Detected in blood lymph, colon, small intestine, ovary, testis, prostate, thymus and spleen with highest levels in testis.

It localises to the cell projection. It is found in the cilium. The protein localises to the flagellum membrane. The protein resides in the endoplasmic reticulum membrane. May play a role in sperm development or sperm function. However, does not appear to have an essential role in spermatogenesis or male fertility. The protein is Patched domain-containing protein 3 (PTCHD3) of Homo sapiens (Human).